Here is a 459-residue protein sequence, read N- to C-terminus: MDTIAAISTPMGEGAIAIIRLSGPEAVQIADRMYKGPKEKKLVSVDSHTIHYGHIVDARTDQVIEEVMVSVLRAPKTFTREDVIEINCHGGIVTVNKVLQLALREGARLAEPGEFTKRAFLNGRIDLSQAEAVMDLIRAKTDRAMNVAITQMEGRLSGLVQRLRGEILETLAHIEVNIDYPEYDDVEEMTHRVLVEKATSVKKEIESLLSTSHQGKILREGLSTVIIGRPNVGKSSLLNSLVQETKAIVTDIPGTTRDVIEEYVNVRGVPLRLVDTAGIRETEDIVERIGVERSRQVLKEADLILLVLNYSEELSEEDIKLFEAVSGMDIIVIVNKTDLEPKLDVEKVKQLAKDRPVVTTSLLQEKGIDELEMAIQSLFFTGSIESGDLTYVSNTRHIALLQAAKQSIEDALEGIEMDVPIDIVQIDLTRCWEQLGEIIGDAVHESLIDQLFSQFCLGK.

Arg-20, Glu-85, and Arg-124 together coordinate (6S)-5-formyl-5,6,7,8-tetrahydrofolate. The TrmE-type G domain occupies 221 to 380 (GLSTVIIGRP…LEMAIQSLFF (160 aa)). Residue Asn-231 coordinates K(+). Residues 231–236 (NVGKSS), 250–256 (TDIPGTT), and 275–278 (DTAG) contribute to the GTP site. Ser-235 contributes to the Mg(2+) binding site. Residues Thr-250, Ile-252, and Thr-255 each coordinate K(+). A Mg(2+)-binding site is contributed by Thr-256. Position 459 (Lys-459) interacts with (6S)-5-formyl-5,6,7,8-tetrahydrofolate.

This sequence belongs to the TRAFAC class TrmE-Era-EngA-EngB-Septin-like GTPase superfamily. TrmE GTPase family. In terms of assembly, homodimer. Heterotetramer of two MnmE and two MnmG subunits. K(+) serves as cofactor.

It localises to the cytoplasm. Exhibits a very high intrinsic GTPase hydrolysis rate. Involved in the addition of a carboxymethylaminomethyl (cmnm) group at the wobble position (U34) of certain tRNAs, forming tRNA-cmnm(5)s(2)U34. This Bacillus pumilus (strain SAFR-032) protein is tRNA modification GTPase MnmE.